The following is a 95-amino-acid chain: uncharacterized protein (95 aa).

Positions 1-17 (MTSSLVIYIFLWSRLIC) are cleaved as a signal peptide.

This is an uncharacterized protein from Saccharomyces cerevisiae (strain ATCC 204508 / S288c) (Baker's yeast).